A 208-amino-acid polypeptide reads, in one-letter code: Type 4 adapter protein LvgA (208 aa).

In terms of assembly, the T4BSS is a complex nanomachine composed of several subcomplexes. This subunit is part of the Type IV Coupling Complex (T4CC), a subcomplex composed of the DotLMNYZ core and the IcmSW-LvgA adapter subunits, linked by the C-terminal tail of DotL. Interacts with DotL, IcmS and IcmW. Interacts with various effector proteins, including VpdB, SetA, PieA and SidH.

The protein resides in the cytoplasm. Component of the Dot/Icm type IVB secretion system (T4BSS), which is used to inject bacterial effector proteins into eukaryotic host cells. Part of a subcomplex which recruits effector proteins and delivers them to the core transmembrane subcomplex. Is a critical subunit for binding a subset of effector proteins. Recognizes more than one type of binding motif. May be a critical factor that confers host specificity. This chain is Type 4 adapter protein LvgA, found in Legionella pneumophila subsp. pneumophila (strain Philadelphia 1 / ATCC 33152 / DSM 7513).